We begin with the raw amino-acid sequence, 404 residues long: 8-amino-7-oxononanoate synthase (404 aa).

R20 provides a ligand contact to substrate. Position 116–117 (116–117) interacts with pyridoxal 5'-phosphate; that stretch reads GY. Substrate is bound at residue H141. The pyridoxal 5'-phosphate site is built by S187, H215, and T243. Residue K246 is modified to N6-(pyridoxal phosphate)lysine. T366 contributes to the substrate binding site.

Belongs to the class-II pyridoxal-phosphate-dependent aminotransferase family. BioF subfamily. In terms of assembly, homodimer. The cofactor is pyridoxal 5'-phosphate.

It catalyses the reaction 6-carboxyhexanoyl-[ACP] + L-alanine + H(+) = (8S)-8-amino-7-oxononanoate + holo-[ACP] + CO2. It participates in cofactor biosynthesis; biotin biosynthesis. Functionally, catalyzes the decarboxylative condensation of pimeloyl-[acyl-carrier protein] and L-alanine to produce 8-amino-7-oxononanoate (AON), [acyl-carrier protein], and carbon dioxide. The protein is 8-amino-7-oxononanoate synthase of Cupriavidus taiwanensis (strain DSM 17343 / BCRC 17206 / CCUG 44338 / CIP 107171 / LMG 19424 / R1) (Ralstonia taiwanensis (strain LMG 19424)).